Consider the following 343-residue polypeptide: Holliday junction branch migration complex subunit RuvB (343 aa).

Residues 4-193 (TDNLTAAQPQ…FGIVSRLEFY (190 aa)) form a large ATPase domain (RuvB-L) region. ATP contacts are provided by residues Leu-32, Arg-33, Gly-74, Lys-77, Thr-78, Thr-79, 140–142 (EDY), Arg-183, Tyr-193, and Arg-230. Thr-78 contributes to the Mg(2+) binding site. Positions 194-264 (ENRDLATIVS…IADAALSMLD (71 aa)) are small ATPAse domain (RuvB-S). Residues 267–343 (VQGLDVMDRK…YLHFGLPVEK (77 aa)) are head domain (RuvB-H). DNA is bound by residues Arg-322 and Arg-327.

This sequence belongs to the RuvB family. Homohexamer. Forms an RuvA(8)-RuvB(12)-Holliday junction (HJ) complex. HJ DNA is sandwiched between 2 RuvA tetramers; dsDNA enters through RuvA and exits via RuvB. An RuvB hexamer assembles on each DNA strand where it exits the tetramer. Each RuvB hexamer is contacted by two RuvA subunits (via domain III) on 2 adjacent RuvB subunits; this complex drives branch migration. In the full resolvosome a probable DNA-RuvA(4)-RuvB(12)-RuvC(2) complex forms which resolves the HJ.

The protein localises to the cytoplasm. The enzyme catalyses ATP + H2O = ADP + phosphate + H(+). In terms of biological role, the RuvA-RuvB-RuvC complex processes Holliday junction (HJ) DNA during genetic recombination and DNA repair, while the RuvA-RuvB complex plays an important role in the rescue of blocked DNA replication forks via replication fork reversal (RFR). RuvA specifically binds to HJ cruciform DNA, conferring on it an open structure. The RuvB hexamer acts as an ATP-dependent pump, pulling dsDNA into and through the RuvAB complex. RuvB forms 2 homohexamers on either side of HJ DNA bound by 1 or 2 RuvA tetramers; 4 subunits per hexamer contact DNA at a time. Coordinated motions by a converter formed by DNA-disengaged RuvB subunits stimulates ATP hydrolysis and nucleotide exchange. Immobilization of the converter enables RuvB to convert the ATP-contained energy into a lever motion, pulling 2 nucleotides of DNA out of the RuvA tetramer per ATP hydrolyzed, thus driving DNA branch migration. The RuvB motors rotate together with the DNA substrate, which together with the progressing nucleotide cycle form the mechanistic basis for DNA recombination by continuous HJ branch migration. Branch migration allows RuvC to scan DNA until it finds its consensus sequence, where it cleaves and resolves cruciform DNA. This chain is Holliday junction branch migration complex subunit RuvB, found in Neisseria meningitidis serogroup A / serotype 4A (strain DSM 15465 / Z2491).